Here is a 384-residue protein sequence, read N- to C-terminus: F-box protein At2g07140 (384 aa).

The 46-residue stretch at 1–46 folds into the F-box domain; sequence MTLPELPKDLVEEILSFVPATSLKRLRSTCKGWNRLFKDDKRFTRI.

This is F-box protein At2g07140 from Arabidopsis thaliana (Mouse-ear cress).